The chain runs to 98 residues: Putative defensin-like protein 233 (98 aa).

A signal peptide spans 1 to 28 (MGMWCTTLFMVSCVSICLILSHVQEVEA). 4 cysteine pairs are disulfide-bonded: cysteine 35-cysteine 96, cysteine 45-cysteine 70, cysteine 53-cysteine 86, and cysteine 68-cysteine 88.

The protein belongs to the DEFL family. In terms of tissue distribution, expressed at least in stem, root, rosette leaves and flower buds.

It localises to the secreted. The chain is Putative defensin-like protein 233 (SCRL22) from Arabidopsis thaliana (Mouse-ear cress).